Reading from the N-terminus, the 155-residue chain is MANVELQTSLGKILIELYTEHAPKTCQNFYTLAKEGYYDGVIFHRVIPDFVIQGGDPTGTGRGGTSIYGDKFDDEIHSDLHHTGAGILSMANAGPNTNSSQFFITLAPTPWLDGKHTIFGRVVSGLSVCKRMGLIRTDSSDRPIEPLKIIKAVAL.

One can recognise a PPIase cyclophilin-type domain in the interval 1-154 (MANVELQTSL…EPLKIIKAVA (154 aa)).

This sequence belongs to the cyclophilin-type PPIase family. PPIL1 subfamily. As to quaternary structure, interacts with cwf13/snw1.

The enzyme catalyses [protein]-peptidylproline (omega=180) = [protein]-peptidylproline (omega=0). PPIases accelerate the folding of proteins. It catalyzes the cis-trans isomerization of proline imidic peptide bonds in oligopeptides. This chain is Peptidyl-prolyl cis-trans isomerase ppi1 (ppi1), found in Schizosaccharomyces pombe (strain 972 / ATCC 24843) (Fission yeast).